A 779-amino-acid chain; its full sequence is Cysteine-rich protein 2-binding protein (779 aa).

A disordered region spans residues Met1–Gly34. Phosphoserine is present on Ser4. At Lys230 the chain carries N6-acetyllysine. Disordered stretches follow at residues Ser247–Phe292, Leu314–Thr345, and Pro360–Tyr457. Residues Met255–Lys275 are compositionally biased toward basic and acidic residues. At Ser284 the chain carries Phosphoserine. Lys291 carries the post-translational modification N6-acetyllysine. A compositionally biased stretch (low complexity) spans Leu314–Ser334. Composition is skewed to basic and acidic residues over residues Arg402–Gly423 and Lys443–Pro452. Position 413 is a phosphoserine (Ser413). An N-acetyltransferase domain is found at Leu635–Arg779.

Interacts with the LIM 1 domain of CSRP2. Component of the ADA2A-containing complex (ATAC), composed of CSRP2BP, KAT2A, TADA2L, TADA3L, ZZ3, MBIP, WDR5, YEATS2, CCDC101 and DR1. In the complex, it probably interacts directly with KAT2A, MBIP and WDR5.

The protein localises to the nucleus. Its subcellular location is the cytoplasm. Its function is as follows. Component of the ATAC complex, a complex with histone acetyltransferase activity on histones H3 and H4. May function as a scaffold for the ATAC complex to promote ATAC complex stability. Has also weak histone acetyltransferase activity toward histone H4. Required for the normal progression through G1 and G2/M phases of the cell cycle. This chain is Cysteine-rich protein 2-binding protein, found in Mus musculus (Mouse).